Consider the following 403-residue polypeptide: Sorting nexin-32 (403 aa).

A PX domain is found at 20 to 168; the sequence is LQGDSSLQVE…VFLEYGQDLS (149 aa). Residues 258–335 adopt a coiled-coil conformation; the sequence is NQLRTSFLKL…KARTRNREVR (78 aa).

Belongs to the sorting nexin family.

May be involved in several stages of intracellular trafficking. This Homo sapiens (Human) protein is Sorting nexin-32 (SNX32).